A 187-amino-acid chain; its full sequence is Capsid protein VP10 (187 aa).

A disulfide bridge connects residues Cys-45 and Cys-51.

The protein resides in the virion. In terms of biological role, VP10 self-assembles, together with capsid protein VP4, to form an icosahedral caspid of 87 nm in diameter, with a T=43 symmetry and composed of 420 hexamers and 12 pentamers. VP4 proteins arrange into hexons, while VP10 proteins form the pentameric densities located at the 5-fold axes in the virion. The stoichiometry of VP4:VP10 is 42:1. In Sulfolobus polyhedral virus 1 (SPV1), this protein is Capsid protein VP10.